The primary structure comprises 440 residues: Elongation factor 1-alpha (440 aa).

The 224-residue stretch at 5–228 (KPHINLVVIG…ALDTYIQPPK (224 aa)) folds into the tr-type G domain. The tract at residues 14 to 21 (GHVDHGKS) is G1. 14–21 (GHVDHGKS) provides a ligand contact to GTP. Ser-21 serves as a coordination point for Mg(2+). A G2 region spans residues 70–74 (GVTID). Residues 91 to 94 (DAPG) form a G3 region. GTP-binding positions include 91 to 95 (DAPGH) and 153 to 156 (NKMD). Residues 153–156 (NKMD) form a G4 region. The interval 194–196 (SAW) is G5.

It belongs to the TRAFAC class translation factor GTPase superfamily. Classic translation factor GTPase family. EF-Tu/EF-1A subfamily.

It localises to the cytoplasm. The catalysed reaction is GTP + H2O = GDP + phosphate + H(+). Its function is as follows. GTP hydrolase that promotes the GTP-dependent binding of aminoacyl-tRNA to the A-site of ribosomes during protein biosynthesis. The polypeptide is Elongation factor 1-alpha (Hyperthermus butylicus (strain DSM 5456 / JCM 9403 / PLM1-5)).